The sequence spans 1654 residues: Adapter protein unc-53 (1654 aa).

The Calponin-homology (CH) domain maps to 6–115; it reads VELIPIYTDW…LLFLLSTYKQ (110 aa). 8 disordered regions span residues 128-261, 274-364, 381-440, 480-501, 595-626, 650-680, 698-729, and 747-799; these read EQLP…PQTQ, SKLA…GSAT, APII…SSDD, VKSTAKKDPPPAVPPRDTQPTI, AQVTPPTKTSGNHSLERRMGKNKTSESSGYTS, AQNGYPDNFEDSSSLSSGISDNNELDDISTD, SHFVRHPTSSSSKPRVPSRSSTSVDSRSRAEQ, and AATS…SGQF. Low complexity predominate over residues 143 to 161; that stretch reads PSPRVATSATASATNPNSN. The span at 162–174 shows a compositional bias: polar residues; it reads FPQMSTSRLQTPQ. A compositionally biased stretch (low complexity) spans 197 to 243; it reads PSSSTTSSNNTNSFRPSSRSSGNNNVGSTISTSAKSLESSSTYSSIS. The segment covering 244 to 261 has biased composition (polar residues); it reads NLNRPTSQLQKPSRPQTQ. Residues 310-327 show a composition bias toward low complexity; the sequence is LKLKLFSSKNPSSSSNSP. Over residues 388–397 the composition is skewed to basic and acidic residues; that stretch reads DSKRCSKSSE. Residues 407–429 are compositionally biased toward low complexity; sequence STSPTSSSTEGSLSMHSTSSKSS. Residues 595 to 607 show a composition bias toward polar residues; it reads AQVTPPTKTSGNH. The span at 705 to 722 shows a compositional bias: low complexity; that stretch reads TSSSSKPRVPSRSSTSVD. Polar residues-rich tracts occupy residues 747–769 and 779–799; these read AATSTFGQHSLRSPGYSSYSPHL and SMHSQTSRRPSSQKPSYSGQF. A coiled-coil region spans residues 962-994; it reads LNEKYEHAIRDMARDLECYKNTVDSLTKKQENY. The tract at residues 1059 to 1083 is disordered; sequence LESVASHRSSMSSSSKSSKQEKISL. Over residues 1061-1083 the composition is skewed to low complexity; that stretch reads SVASHRSSMSSSSKSSKQEKISL. The stretch at 1152-1184 forms a coiled coil; the sequence is DRAREVDVLRETVNKLKTENKQLKKEVDKLTNG.

It belongs to the Nav/unc-53 family. In terms of assembly, interacts with sem-5. Interacts with cmd-1 in the presence of Ca(2+).

Involved in the migration and outgrowth of muscles, axons and excretory canals. In Caenorhabditis elegans, this protein is Adapter protein unc-53 (unc-53).